A 248-amino-acid chain; its full sequence is Ribosomal RNA small subunit methyltransferase J (248 aa).

S-adenosyl-L-methionine is bound by residues 97–98 (RD), 113–114 (ER), and D167.

This sequence belongs to the methyltransferase superfamily. RsmJ family.

The protein resides in the cytoplasm. The catalysed reaction is guanosine(1516) in 16S rRNA + S-adenosyl-L-methionine = N(2)-methylguanosine(1516) in 16S rRNA + S-adenosyl-L-homocysteine + H(+). In terms of biological role, specifically methylates the guanosine in position 1516 of 16S rRNA. This Aeromonas hydrophila subsp. hydrophila (strain ATCC 7966 / DSM 30187 / BCRC 13018 / CCUG 14551 / JCM 1027 / KCTC 2358 / NCIMB 9240 / NCTC 8049) protein is Ribosomal RNA small subunit methyltransferase J.